The chain runs to 127 residues: Ribonuclease P protein component 1 (127 aa).

This sequence belongs to the eukaryotic/archaeal RNase P protein component 1 family. As to quaternary structure, consists of a catalytic RNA component and at least 4 protein subunits. Forms a subcomplex with Rnp4 which stimulates the catalytic RNA.

It is found in the cytoplasm. It carries out the reaction Endonucleolytic cleavage of RNA, removing 5'-extranucleotides from tRNA precursor.. Part of ribonuclease P, a protein complex that generates mature tRNA molecules by cleaving their 5'-ends. The RNA is catalytic, but its KM for pre-tRNA is 170-fold decreased in the presence of the 4 known protein subunits (Rnp1-4). The protein subunits also decrease the amount of Mg(2+) needed for activity. The polypeptide is Ribonuclease P protein component 1 (Pyrococcus furiosus (strain ATCC 43587 / DSM 3638 / JCM 8422 / Vc1)).